A 97-amino-acid chain; its full sequence is Protein RESPONSE TO LOW SULFUR 3 (97 aa).

Positions 8–42 (VTVAAEEVEELRRRNGELEREMEEMKKEMVQLWRR) form a coiled coil.

In Arabidopsis thaliana (Mouse-ear cress), this protein is Protein RESPONSE TO LOW SULFUR 3.